The sequence spans 245 residues: Vacuolar iron transporter (245 aa).

The Cytoplasmic segment spans residues 1 to 28; sequence MGEVGESEKYLLNRHKEHHFTAGETVRD. Residues 29–49 traverse the membrane as a helical segment; it reads IIIGFSDGLTVPFALAAGLSG. Residues 50–55 are Vacuolar-facing; sequence ANASSS. A helical transmembrane segment spans residues 56-76; that stretch reads IILTAGIAEVAAGAISMGLGG. The Cytoplasmic portion of the chain corresponds to 77–162; sequence YLAAKSEADH…PRRALQSALT (86 aa). Residues glutamate 94, glutamate 97, glutamate 105, glutamate 108, methionine 141, and glutamate 145 each contribute to the Fe cation site. The chain crosses the membrane as a helical span at residues 163-183; it reads IAISYVLSGLIPLLPYMFIPI. Residues 184–186 lie on the Vacuolar side of the membrane; that stretch reads AQK. A helical membrane pass occupies residues 187–207; sequence AVVSSVIVTIFALLIFGFAKG. Residues 208 to 214 lie on the Cytoplasmic side of the membrane; that stretch reads YFTGNKP. Residues 215–235 traverse the membrane as a helical segment; the sequence is VWSALQTALIGAIASAAAFGM. At 236–245 the chain is on the vacuolar side; it reads AKGCASSVFE.

It belongs to the CCC1 family. In terms of tissue distribution, expressed in petal tissues, but not in other parts of the plant, such as leaves, roots, sepals and stems.

Its subcellular location is the vacuole membrane. The catalysed reaction is Fe(2+)(in) = Fe(2+)(out). Vacuolar iron transporter involved in the transfer of iron ions from the cytosol to the vacuole for intracellular iron storage. Plays an essential role in the development of blue coloration in cornflower petals. This Centaurea cyanus (Garden cornflower) protein is Vacuolar iron transporter.